The primary structure comprises 469 residues: UDP-N-acetylmuramate--L-alanine ligase (469 aa).

Residue 120 to 126 (GTHGKTT) coordinates ATP.

The protein belongs to the MurCDEF family.

The protein resides in the cytoplasm. It carries out the reaction UDP-N-acetyl-alpha-D-muramate + L-alanine + ATP = UDP-N-acetyl-alpha-D-muramoyl-L-alanine + ADP + phosphate + H(+). It functions in the pathway cell wall biogenesis; peptidoglycan biosynthesis. Functionally, cell wall formation. In Acetivibrio thermocellus (strain ATCC 27405 / DSM 1237 / JCM 9322 / NBRC 103400 / NCIMB 10682 / NRRL B-4536 / VPI 7372) (Clostridium thermocellum), this protein is UDP-N-acetylmuramate--L-alanine ligase.